The chain runs to 131 residues: Aspartate 1-decarboxylase (131 aa).

Catalysis depends on S25, which acts as the Schiff-base intermediate with substrate; via pyruvic acid. The residue at position 25 (S25) is a Pyruvic acid (Ser). T57 is a binding site for substrate. Catalysis depends on Y58, which acts as the Proton donor. G73 to A75 contributes to the substrate binding site.

This sequence belongs to the PanD family. In terms of assembly, heterooctamer of four alpha and four beta subunits. The cofactor is pyruvate. In terms of processing, is synthesized initially as an inactive proenzyme, which is activated by self-cleavage at a specific serine bond to produce a beta-subunit with a hydroxyl group at its C-terminus and an alpha-subunit with a pyruvoyl group at its N-terminus.

Its subcellular location is the cytoplasm. It catalyses the reaction L-aspartate + H(+) = beta-alanine + CO2. It functions in the pathway cofactor biosynthesis; (R)-pantothenate biosynthesis; beta-alanine from L-aspartate: step 1/1. Functionally, catalyzes the pyruvoyl-dependent decarboxylation of aspartate to produce beta-alanine. This Leptothrix cholodnii (strain ATCC 51168 / LMG 8142 / SP-6) (Leptothrix discophora (strain SP-6)) protein is Aspartate 1-decarboxylase.